The primary structure comprises 110 residues: UPF0122 protein BCA_3946 (110 aa).

It belongs to the UPF0122 family.

Its function is as follows. Might take part in the signal recognition particle (SRP) pathway. This is inferred from the conservation of its genetic proximity to ftsY/ffh. May be a regulatory protein. The sequence is that of UPF0122 protein BCA_3946 from Bacillus cereus (strain 03BB102).